The following is a 793-amino-acid chain: Alanine--tRNA ligase, mitochondrial (793 aa).

Residues arginine 88, tryptophan 187, and 224-226 each bind ATP; that span reads IWN. The L-alanine site is built by asparagine 226 and aspartate 249. Glycine 253 contacts ATP. 4 residues coordinate Zn(2+): histidine 594, histidine 598, cysteine 706, and histidine 710.

It belongs to the class-II aminoacyl-tRNA synthetase family. In terms of assembly, monomer. It depends on Zn(2+) as a cofactor.

Its subcellular location is the mitochondrion. The enzyme catalyses tRNA(Ala) + L-alanine + ATP = L-alanyl-tRNA(Ala) + AMP + diphosphate. In terms of biological role, catalyzes the attachment of alanine to tRNA(Ala) in a two-step reaction: alanine is first activated by ATP to form Ala-AMP and then transferred to the acceptor end of tRNA(Ala). Also edits incorrectly charged tRNA(Ala) via its editing domain. The protein is Alanine--tRNA ligase, mitochondrial of Caenorhabditis elegans.